The following is a 94-amino-acid chain: Small ribosomal subunit protein uS19c (94 aa).

Belongs to the universal ribosomal protein uS19 family.

It is found in the plastid. The protein resides in the chloroplast. Functionally, protein S19 forms a complex with S13 that binds strongly to the 16S ribosomal RNA. The chain is Small ribosomal subunit protein uS19c (rps19) from Euglena gracilis.